Consider the following 319-residue polypeptide: Telomere-binding protein cav (319 aa).

A required for binding to Su(var)205 region spans residues 107 to 312; it reads RRKMVQPYPE…SISFQNSGSE (206 aa). 2 disordered regions span residues 141–163 and 186–248; these read WQKQKRRNQSAHATQPDSQDNEV and PSDL…PDYY. Short sequence motifs (su(var)205-binding Pro-containing repeat) lie at residues 220–224 and 273–279; these read PETQM and PETEMNE. A compositionally biased stretch (polar residues) spans 291–311; sequence SMSIGPSINSDGSISFQNSGS. The disordered stretch occupies residues 291–319; it reads SMSIGPSINSDGSISFQNSGSEPIDVDVN.

Interacts (via C-terminus) with Su(var)205 dimer (via hinge and chromoshadow domain) and with moi to form the terminin, telomere-capping, complex. Interacts with HP6, which is also part of the terminin complex.

The protein localises to the nucleus. Its subcellular location is the chromosome. It localises to the telomere. In terms of biological role, binds to chromosome ends in a sequence-dependent manner and is required for telomere capping. The polypeptide is Telomere-binding protein cav (Drosophila yakuba (Fruit fly)).